The following is a 361-amino-acid chain: Spermatogenesis-associated protein 17 (361 aa).

IQ domains follow at residues 32–61 (ENDA…IVTI), 55–84 (LNRI…VAYY), and 91–120 (YNAM…LKEY).

It is found in the cytoplasm. This chain is Spermatogenesis-associated protein 17 (SPATA17), found in Homo sapiens (Human).